Reading from the N-terminus, the 376-residue chain is Zinc finger CCCH domain-containing protein C337.12 (376 aa).

Positions 2 to 25 (NEQQLLENIASLAGAINQYKNEKE) form a coiled coil. The interval 60–95 (SKSTAASPPYVIPSTSSNADDANKEPEKQSTSDYVS) is disordered. A compositionally biased stretch (basic and acidic residues) spans 80-89 (DANKEPEKQS). Positions 105–140 (KKNILEHDLQARKANLESYRAKLEKEYKTLAENKIQ) form a coiled coil. C3H1-type zinc fingers lie at residues 202 to 228 (SPSA…FVHE), 229 to 256 (PTRK…HELD), 257 to 283 (PRRI…HIHY), and 284 to 312 (SENA…HILQ). The segment at 347–376 (SKTAGSINPEDSGSEIGSNSLESNLDFISV) is disordered. The segment covering 349–369 (TAGSINPEDSGSEIGSNSLES) has biased composition (polar residues).

It localises to the nucleus. The protein is Zinc finger CCCH domain-containing protein C337.12 of Schizosaccharomyces pombe (strain 972 / ATCC 24843) (Fission yeast).